Consider the following 433-residue polypeptide: Trigger factor (433 aa).

Residues 163–248 (GDVVVLDFAA…VHAVKERRLP (86 aa)) form the PPIase FKBP-type domain.

This sequence belongs to the FKBP-type PPIase family. Tig subfamily.

It is found in the cytoplasm. The enzyme catalyses [protein]-peptidylproline (omega=180) = [protein]-peptidylproline (omega=0). Functionally, involved in protein export. Acts as a chaperone by maintaining the newly synthesized protein in an open conformation. Functions as a peptidyl-prolyl cis-trans isomerase. This is Trigger factor from Nitratidesulfovibrio vulgaris (strain ATCC 29579 / DSM 644 / CCUG 34227 / NCIMB 8303 / VKM B-1760 / Hildenborough) (Desulfovibrio vulgaris).